Reading from the N-terminus, the 697-residue chain is Potassium-transporting ATPase ATP-binding subunit (697 aa).

The next 4 helical transmembrane spans lie at proline 55–serine 75, serine 79–alanine 99, leucine 245–phenylalanine 265, and valine 271–isoleucine 291. Aspartate 324 serves as the catalytic 4-aspartylphosphate intermediate. ATP-binding positions include aspartate 361, glutamate 365, phenylalanine 393–serine 400, and lysine 412. The Mg(2+) site is built by aspartate 535 and aspartate 539. The next 3 membrane-spanning stretches (helical) occupy residues phenylalanine 605–methionine 625, alanine 633–methionine 653, and glycine 677–isoleucine 697.

The protein belongs to the cation transport ATPase (P-type) (TC 3.A.3) family. Type IA subfamily. As to quaternary structure, the system is composed of three essential subunits: KdpA, KdpB and KdpC.

Its subcellular location is the cell membrane. The enzyme catalyses K(+)(out) + ATP + H2O = K(+)(in) + ADP + phosphate + H(+). Its function is as follows. Part of the high-affinity ATP-driven potassium transport (or Kdp) system, which catalyzes the hydrolysis of ATP coupled with the electrogenic transport of potassium into the cytoplasm. This subunit is responsible for energy coupling to the transport system and for the release of the potassium ions to the cytoplasm. This chain is Potassium-transporting ATPase ATP-binding subunit, found in Bacillus cereus (strain AH820).